Reading from the N-terminus, the 347-residue chain is MKSRPICSVIPPYILHRIIANGTDEQRHCAQQTLMHVQSLMVSHHPRPEPHEKLPAGQANRSIHDAEQQQQLPGKLVRAEGQPSNGDIAVDEAYSYLGVTYDFFWKIFQRNSLDAEGLPLAGTVHYGQDYQNAFWNGQQMVFGDGDGKIFNRFTIALDVVAHELTHGITENEAGLIYFRQSGALNESLSDVFGSMVKQYHLGQTTEQADWLIGAELLADGIHGMGLRSMSHPGTAYDDELLGIDPQPSHMNEYVNTREDNGGVHLNSGIPNRAFYLAAIALGGHSWEKAGRIWYDTLCDKTLPQNADFEIFARHTIQHAAKRFNHTVADIVQQSWETVGVEVRQEFL.

The signal sequence occupies residues 1–20; sequence MKSRPICSVIPPYILHRIIA. The tract at residues 43 to 68 is disordered; it reads SHHPRPEPHEKLPAGQANRSIHDAEQ. Histidine 162 contributes to the Zn(2+) binding site. Glutamate 163 is a catalytic residue. Residues histidine 166 and glutamate 186 each coordinate Zn(2+). The active-site Proton donor is histidine 264.

This sequence belongs to the peptidase M4 family. Requires Ca(2+) as cofactor. It depends on Zn(2+) as a cofactor.

It is found in the secreted. This chain is Extracellular metalloprotease (prt1), found in Pectobacterium carotovorum subsp. carotovorum (Erwinia carotovora subsp. carotovora).